Consider the following 464-residue polypeptide: JmjC domain-containing protein 1 (464 aa).

Positions 182 to 349 (LYAKDMHLFR…QMYTALKEQY (168 aa)) constitute a JmjC domain.

The polypeptide is JmjC domain-containing protein 1 (jmj1) (Schizosaccharomyces pombe (strain 972 / ATCC 24843) (Fission yeast)).